Consider the following 62-residue polypeptide: Large ribosomal subunit protein bL28 (62 aa).

This sequence belongs to the bacterial ribosomal protein bL28 family.

This Helicobacter pylori (strain P12) protein is Large ribosomal subunit protein bL28.